Reading from the N-terminus, the 351-residue chain is ATP-dependent 6-phosphofructokinase subunit gamma (351 aa).

In terms of assembly, heterododecamer of 4 alpha, 4 beta and 4 gamma chains. The gamma chain bridges the N-terminal halves of the alpha and beta subunits.

It localises to the cytoplasm. The protein operates within carbohydrate degradation; glycolysis; D-glyceraldehyde 3-phosphate and glycerone phosphate from D-glucose: step 3/4. In terms of biological role, structural subunit of pyrophosphate--fructose 6-phosphate 1-phosphotransferase. Not required for catalytic activity. Fine-tunes allosteric regulation of the ATP-PFK by ATP, fructose 2,6-bisphosphate and AMP. The chain is ATP-dependent 6-phosphofructokinase subunit gamma (PFK3) from Komagataella phaffii (strain GS115 / ATCC 20864) (Yeast).